The chain runs to 354 residues: Neutral protease 2 homolog MEP3 (354 aa).

The first 19 residues, 1–19 (MHFTSSLLALVALTTQALA), serve as a signal peptide directing secretion. Residues 20–179 (FPLNDLPKRD…QSAIPKLEKR (160 aa)) constitute a propeptide that is removed on maturation. Intrachain disulfides connect cysteine 186–cysteine 256 and cysteine 263–cysteine 281. Position 305 (histidine 305) interacts with Zn(2+). Glutamate 306 is an active-site residue. Zn(2+) is bound by residues histidine 309 and aspartate 320.

It belongs to the peptidase M35 family. It depends on Zn(2+) as a cofactor.

The protein resides in the secreted. It carries out the reaction Preferential cleavage of bonds with hydrophobic residues in P1'. Also 3-Asn-|-Gln-4 and 8-Gly-|-Ser-9 bonds in insulin B chain.. Its function is as follows. Secreted metalloproteinase that allows assimilation of proteinaceous substrates. Shows high activities on basic nuclear substrates such as histone and protamine. May be involved in virulence. The sequence is that of Neutral protease 2 homolog MEP3 (MEP3) from Coccidioides posadasii (strain C735) (Valley fever fungus).